Reading from the N-terminus, the 626-residue chain is MVAPWRVSVRVCLSHLRCFELRQGLSLLRPSECPRDARLCWLLLGTLPKVVSLCGDVGEGAPDVLSRRRVRCSGAAGAGPAESLPRAGPLGGVFLHLRLWLRAGALLVKFFPLLLLYPLTYLAPSVSTLWLHLLLKATETSGPTYIKLGQWASTRRDLFSEAFCAQFSKLHVRVTPHPWTHTERFLRQAFGDDWGSILSFENREPVGSGCVAQVYKAYANTAFLETDSVQRLGRASCLPPFSHTGAVGGLRELFGYLGNGRKPPENLADQSFLERLLLPKADLVGSNAGVSRAQVPGHQPEATNLISVAVKVLHPGLLAQVHMDLLLMKIGSRVLGVLPGIKWLSLPEIVEEFEKLMVQQIDLRYEAQNLEHFQVNFRNVKAVKFPTPLRPFVTREVLVETYEESVPVSSYQQAGIPVDLKRKIARLGINMLLKMIFVDNFVHADLHPGNILVQGANGLSSSQEAQLQQADICDTLVVAVPSSLCPLRLVLLDAGIVAELQAPDLRNFRAVFMAVVMGQGQRVAELILHHARASECRDVEGFKTEMAMLVTQARKNTITLEKLHVSSLLSSVFKLLMTHKVKLESNFASIVFAIMVLEGLGRSLDPKLDILEAARPFLLTGPVCPP.

A helical transmembrane segment spans residues 103 to 123 (AGALLVKFFPLLLLYPLTYLA). The Protein kinase domain maps to 200-618 (FENREPVGSG…DILEAARPFL (419 aa)). Residues 206 to 214 (VGSGCVAQV) and Lys311 contribute to the ATP site. The Proton acceptor role is filled by Asp445.

The protein belongs to the protein kinase superfamily. ADCK protein kinase family.

The protein localises to the mitochondrion. Its subcellular location is the membrane. Its function is as follows. The function of this protein is not yet clear. It is not known if it has protein kinase activity and what type of substrate it would phosphorylate (Ser, Thr or Tyr). Involved in the mitochondrial import of CoQ precursors, plays a role in muscle mitochondrial function and fatty acid beta-oxidation. This is an uncharacterized protein from Homo sapiens (Human).